Reading from the N-terminus, the 367-residue chain is Phosphoglycerate kinase (367 aa).

Positions 1, 2, 3, 4, 17, 40, 41, 43, 44, 98, 99, 146, and 147 each coordinate (2R)-3-phosphoglycerate. Residue Gly190 coordinates ADP. Gly190 provides a ligand contact to CDP. AMP-binding residues include Ala191 and Lys192. Ala191 serves as a coordination point for ATP. Ala191 contributes to the Mg(2+) binding site. The Mg(2+) site is built by Ala194 and Asp195. Asp195 provides a ligand contact to CDP. Lys196 lines the AMP pocket. Lys196 is a binding site for ATP. Gly214 provides a ligand contact to ADP. CDP is bound at residue Gly214. The AMP site is built by Gly215 and Gly289. ATP is bound by residues Gly215 and Gly289. The CDP site is built by Gly314 and Phe319. ADP is bound at residue Phe319. Glu320 contributes to the AMP binding site. 3 residues coordinate ATP: Glu320, Asp351, and Thr352. Asp351 lines the Mg(2+) pocket.

The protein belongs to the phosphoglycerate kinase family. As to quaternary structure, monomer. Requires Mg(2+) as cofactor.

The catalysed reaction is (2R)-3-phosphoglycerate + ATP = (2R)-3-phospho-glyceroyl phosphate + ADP. It participates in carbohydrate degradation; glycolysis; pyruvate from D-glyceraldehyde 3-phosphate: step 2/5. The chain is Phosphoglycerate kinase (PGK) from Paramecium primaurelia.